The sequence spans 86 residues: Anti-adapter protein IraP (86 aa).

Residues 1–36 are a coiled coil; that stretch reads MKNLIAELLVKLAEKEEESKELVAQVEALEIVVTAL.

The protein belongs to the IraP family. Interacts with RssB.

It localises to the cytoplasm. Its function is as follows. Inhibits RpoS proteolysis by regulating RssB activity, thereby increasing the stability of the sigma stress factor RpoS especially during phosphate starvation, but also in stationary phase and during nitrogen starvation. Its effect on RpoS stability is due to its interaction with RssB, which probably blocks the interaction of RssB with RpoS, and the consequent delivery of the RssB-RpoS complex to the ClpXP protein degradation pathway. In Cronobacter sakazakii (strain ATCC BAA-894) (Enterobacter sakazakii), this protein is Anti-adapter protein IraP.